The sequence spans 252 residues: tRNA pseudouridine synthase A (252 aa).

Catalysis depends on D51, which acts as the Nucleophile. Y105 provides a ligand contact to substrate.

The protein belongs to the tRNA pseudouridine synthase TruA family.

It catalyses the reaction uridine(38/39/40) in tRNA = pseudouridine(38/39/40) in tRNA. Formation of pseudouridine at positions 38, 39 and 40 in the anticodon stem and loop of transfer RNAs. This chain is tRNA pseudouridine synthase A, found in Thermoplasma acidophilum (strain ATCC 25905 / DSM 1728 / JCM 9062 / NBRC 15155 / AMRC-C165).